Here is a 191-residue protein sequence, read N- to C-terminus: ECF RNA polymerase sigma-E factor (191 aa).

The interval 1–153 (MSEQLTDQVL…MAITLRELDG (153 aa)) is binds RNAP core. Residues 25-92 (LVVRYQHKVA…KNYLVAQGRR (68 aa)) are sigma-70 factor domain-2. Positions 48 to 61 (DVVQESFIKAYRAL) match the Polymerase core binding motif. Positions 129–180 (QIVFRTIESLPEDLRMAITLRELDGLSYEEIAAIMDCPVGTVRSRIFRAREA) are sigma-70 factor domain-4. The segment at residues 156-175 (YEEIAAIMDCPVGTVRSRIF) is a DNA-binding region (H-T-H motif).

Belongs to the sigma-70 factor family. ECF subfamily. As to quaternary structure, interacts transiently with the RNAP catalytic core formed by RpoA, RpoB, RpoC and RpoZ (2 alpha, 1 beta, 1 beta' and 1 omega subunit) to form the RNAP holoenzyme that can initiate transcription. Interacts 1:1 with anti-sigma-E factor RseA which prevents binding to RNAP catalytic core.

Its subcellular location is the cytoplasm. With respect to regulation, ECF sigma-E is held in an inactive form by its cognate anti-sigma factor (RseA) until released by regulated intramembrane proteolysis (RIP). RIP occurs when an extracytoplasmic signal (periplasmic, acid or heat stress) triggers a concerted proteolytic cascade to transmit information and elicit cellular responses. In S.typhimurium there are 2 cascades, the heat shock response which depends on DegS and RseP, and acid response which depends only on RseP. The anti-sigma factor RseA is an inner membrane protein, binding sigma-E in the cytoplasm and RseB in the periplasm. RseA is first cut extracytoplasmically (site-1 protease, S1P, by DegS), then within the membrane itself (site-2 protease, S2P, by RseP), while cytoplasmic proteases (predominantly ClpX-ClpP) finish degrading the regulatory protein, liberating sigma-E. Degradation of RseA requires 2 signals to activate DegS; an outer membrane protein (OMP) signal activates DegS, while an LPS signal causes release of RseB from RseA, freeing RseA to be cleaved. OMP stress can be abrogated by overexpression of the sRNA rybB. Its function is as follows. Sigma factors are initiation factors that promote the attachment of RNA polymerase (RNAP) to specific initiation sites and are then released. Extracytoplasmic function (ECF) sigma-E controls the envelope stress response, responding to periplasmic protein stress, increased levels of periplasmic lipopolysaccharide (LPS) as well as acid stress, heat shock and oxidative stress; it controls protein processing in the extracytoplasmic compartment. This Salmonella typhimurium (strain 14028s / SGSC 2262) protein is ECF RNA polymerase sigma-E factor (rpoE).